We begin with the raw amino-acid sequence, 116 residues long: Vesicle-associated membrane protein 2 (116 aa).

Residues 1 to 28 (MSATAATVPPAAPAGEGGPPAPPPNLTS) are disordered. S2 carries the N-acetylserine modification. At 2-94 (SATAATVPPA…KRKYWWKNLK (93 aa)) the chain is on the cytoplasmic side. The v-SNARE coiled-coil homology domain maps to 31 to 91 (RLQQTQAQVD…AKLKRKYWWK (61 aa)). The required for interaction with SEPT8 stretch occupies residues 92–116 (NLKMMIILGVICAIILIIIIVYFST). The chain crosses the membrane as a helical; Anchor for type IV membrane protein span at residues 95–114 (MMIILGVICAIILIIIIVYF). The Vesicular segment spans residues 115–116 (ST).

Belongs to the synaptobrevin family. As to quaternary structure, part of the SNARE core complex containing SNAP25, VAMP2 and STX1A; this complex constitutes the basic catalytic machinery of the complex neurotransmitter release apparatus. Recruited to the SNARE complex following binding of the SNARE complex component STX1A to STXBP1. This complex binds to CPLX1. Interacts with VAPA and VAPB. Interacts (via N-terminus) with KCNB1 (via N-terminus and C-terminus); stimulates the channel inactivation rate of KCNB1. Interacts with POPDC1 and STX4. Interacts with WDFY2, PRKCZ and PRKCI. Forms a complex with WDFY2 and PRKCZ. Interacts with SEPT8; the interaction inhibits interaction of VAMP2 with SYP. Interacts with SYP; the interaction is inhibited by interaction with SEPT8. Interacts with PICALM. Interacts with alpha-synuclein/SNCA. Interacts with STX3 isoform 3B. In terms of processing, phosphorylated by PRKCZ in vitro and this phosphorylation is increased in the presence of WDFY2. Post-translationally, (Microbial infection) Targeted and hydrolyzed by C.botulinum neurotoxin type B (BoNT/B, botB); 20 hours after treatment of spinal cord cells almost all the protein has been digested. BoNT/B hydrolyzes the 76-Gln-|-Phe-77 bond and inhibits neurotransmitter release. (Microbial infection) Targeted and hydrolyzed by C.tetani toxin (tetX); 20 hours after treatment of spinal cord cells almost all the protein has been digested. Tetanus toxin hydrolyzes the 76-Gln-|-Phe-77 bond and inhibits neurotransmitter release. Expressed in the outer plexiform layer of the retina (at protein level).

The protein localises to the cytoplasmic vesicle. It is found in the secretory vesicle. Its subcellular location is the synaptic vesicle membrane. The protein resides in the cell membrane. Its function is as follows. Involved in the targeting and/or fusion of transport vesicles to their target membrane. Major SNARE protein of synaptic vesicles which mediates fusion of synaptic vesicles to release neurotransmitters. Essential for fast vesicular exocytosis and activity-dependent neurotransmitter release as well as fast endocytosis that mediates rapid reuse of synaptic vesicles. Modulates the gating characteristics of the delayed rectifier voltage-dependent potassium channel KCNB1. This chain is Vesicle-associated membrane protein 2 (Vamp2), found in Mus musculus (Mouse).